The following is a 977-amino-acid chain: Vacuolar membrane protease (977 aa).

Residues 1 to 17 (MARSRTAGRCNPFAFYR) lie on the Cytoplasmic side of the membrane. A helical transmembrane segment spans residues 18–38 (VPVTVFVTLIYVALLAPIIVV). Residues 39–383 (HHILPAVPES…AFAVFEIHTL (345 aa)) are Vacuolar-facing. N-linked (GlcNAc...) asparagine glycosylation is found at asparagine 113 and asparagine 116. Residues histidine 166 and aspartate 178 each coordinate Zn(2+). Residue glutamate 212 is the Proton acceptor of the active site. 3 residues coordinate Zn(2+): glutamate 213, glutamate 238, and histidine 311. Residues 384-404 (FALSVTLLIVGPLTLFITSII) traverse the membrane as a helical segment. Residues 405–438 (LANQDRMYLFGISVPVDDGFGSVPLRGWRGFFRF) are Cytoplasmic-facing. Residues 439-459 (PFIFGSTTASVVALAYLMAKI) traverse the membrane as a helical segment. Residues 460–469 (NPMIAHSSEY) lie on the Vacuolar side of the membrane. A helical membrane pass occupies residues 470 to 490 (AVWSMMISAWVFVAWFLSRIA). The Cytoplasmic portion of the chain corresponds to 491–500 (NFARPSALHR). Residues 501 to 521 (IYVLTWMFLLTWVLLVITTVY) form a helical membrane-spanning segment. The Vacuolar portion of the chain corresponds to 522 to 525 (ENRD). Residues 526-546 (GIASGYFVIFYAFGTFMATWI) form a helical membrane-spanning segment. Topologically, residues 547–659 (SYLELFSLPK…WSANLPKWTW (113 aa)) are cytoplasmic. The span at 566 to 576 (GQISSRPTSLG) shows a compositional bias: polar residues. Positions 566–604 (GQISSRPTSLGGSRLLTPSGESVGQHPEDEEPTESTSLL) are disordered. A helical transmembrane segment spans residues 660 to 680 (ILQFLLIAPIVIILIGQLGLL). Residues 681-696 (ITSAIHQTMQDGSSTL) are Vacuolar-facing. The helical transmembrane segment at 697–717 (VPYLIIALLTTFLFMPTLPFI) threads the bilayer. Over 718-726 (HRYTYHIPT) the chain is Cytoplasmic. A helical transmembrane segment spans residues 727–747 (FLFLIFVATLVYNLVAFPFSG). The Vacuolar segment spans residues 748-977 (NNRTKLFFLQ…LVKGSRSFEV (230 aa)). 2 N-linked (GlcNAc...) asparagine glycosylation sites follow: asparagine 749 and asparagine 791.

It belongs to the peptidase M28 family. It depends on Zn(2+) as a cofactor.

Its subcellular location is the vacuole membrane. In terms of biological role, may be involved in vacuolar sorting and osmoregulation. The sequence is that of Vacuolar membrane protease from Talaromyces marneffei (strain ATCC 18224 / CBS 334.59 / QM 7333) (Penicillium marneffei).